The primary structure comprises 180 residues: Isopentenyl-diphosphate Delta-isomerase (180 aa).

His22 and His28 together coordinate Mn(2+). Residues 26 to 160 (LKHKAVSVFA…PERFTPWLKI (135 aa)) form the Nudix hydrolase domain. Cys62 is an active-site residue. Mg(2+) is bound at residue Cys62. His64 contacts Mn(2+). Position 82 (Glu82) interacts with Mg(2+). Glu108 and Glu110 together coordinate Mn(2+). The active site involves Glu110.

This sequence belongs to the IPP isomerase type 1 family. Mg(2+) serves as cofactor. Mn(2+) is required as a cofactor.

It is found in the cytoplasm. The catalysed reaction is isopentenyl diphosphate = dimethylallyl diphosphate. The protein operates within isoprenoid biosynthesis; dimethylallyl diphosphate biosynthesis; dimethylallyl diphosphate from isopentenyl diphosphate: step 1/1. Catalyzes the 1,3-allylic rearrangement of the homoallylic substrate isopentenyl (IPP) to its highly electrophilic allylic isomer, dimethylallyl diphosphate (DMAPP). The sequence is that of Isopentenyl-diphosphate Delta-isomerase from Ruegeria pomeroyi (strain ATCC 700808 / DSM 15171 / DSS-3) (Silicibacter pomeroyi).